A 541-amino-acid chain; its full sequence is Malate synthase (541 aa).

The active-site Proton acceptor is Arg-172. The Proton donor role is filled by Asp-452.

The protein belongs to the malate synthase family.

The protein localises to the cytoplasm. It catalyses the reaction glyoxylate + acetyl-CoA + H2O = (S)-malate + CoA + H(+). It participates in carbohydrate metabolism; glyoxylate cycle; (S)-malate from isocitrate: step 2/2. This Myxococcus xanthus (strain DK1622) protein is Malate synthase (mls).